The following is a 341-amino-acid chain: Small ribosomal subunit protein uS3 (341 aa).

The KH type-2 domain maps to 38–106 (IRRMMTRGME…QVQLNILEVK (69 aa)). Disordered stretches follow at residues 224–246 (RAVR…LETA) and 274–341 (PAGQ…TKEG). 2 stretches are compositionally biased toward low complexity: residues 285–303 (AEQP…VTGE) and 311–333 (AAPA…DAPS).

It belongs to the universal ribosomal protein uS3 family. As to quaternary structure, part of the 30S ribosomal subunit. Forms a tight complex with proteins S10 and S14.

Binds the lower part of the 30S subunit head. Binds mRNA in the 70S ribosome, positioning it for translation. In Acidothermus cellulolyticus (strain ATCC 43068 / DSM 8971 / 11B), this protein is Small ribosomal subunit protein uS3.